Consider the following 159-residue polypeptide: Eukaryotic translation initiation factor 5A-1 (159 aa).

Over residues 1 to 12 the composition is skewed to basic and acidic residues; sequence MSDEEHHFESKA. The segment at 1 to 23 is disordered; it reads MSDEEHHFESKADAGASKTYPQQ. Position 52 is a hypusine (lysine 52).

It belongs to the eIF-5A family. Lys-52 undergoes hypusination, a unique post-translational modification that consists in the addition of a butylamino group from spermidine to lysine side chain, leading to the formation of the unusual amino acid hypusine. eIF-5As are the only known proteins to undergo this modification, which is essential for their function.

Its function is as follows. Translation factor that promotes translation elongation and termination, particularly upon ribosome stalling at specific amino acid sequence contexts. Binds between the exit (E) and peptidyl (P) site of the ribosome and promotes rescue of stalled ribosome: specifically required for efficient translation of polyproline-containing peptides as well as other motifs that stall the ribosome. Acts as a ribosome quality control (RQC) cofactor by joining the RQC complex to facilitate peptidyl transfer during CAT tailing step. This Nicotiana plumbaginifolia (Leadwort-leaved tobacco) protein is Eukaryotic translation initiation factor 5A-1 (EIF-5A1).